The following is a 271-amino-acid chain: ATP synthase subunit delta (271 aa).

It belongs to the ATPase delta chain family. In terms of assembly, F-type ATPases have 2 components, F(1) - the catalytic core - and F(0) - the membrane proton channel. F(1) has five subunits: alpha(3), beta(3), gamma(1), delta(1), epsilon(1). F(0) has three main subunits: a(1), b(2) and c(10-14). The alpha and beta chains form an alternating ring which encloses part of the gamma chain. F(1) is attached to F(0) by a central stalk formed by the gamma and epsilon chains, while a peripheral stalk is formed by the delta and b chains.

The protein localises to the cell membrane. In terms of biological role, f(1)F(0) ATP synthase produces ATP from ADP in the presence of a proton or sodium gradient. F-type ATPases consist of two structural domains, F(1) containing the extramembraneous catalytic core and F(0) containing the membrane proton channel, linked together by a central stalk and a peripheral stalk. During catalysis, ATP synthesis in the catalytic domain of F(1) is coupled via a rotary mechanism of the central stalk subunits to proton translocation. Functionally, this protein is part of the stalk that links CF(0) to CF(1). It either transmits conformational changes from CF(0) to CF(1) or is implicated in proton conduction. This Streptomyces griseus subsp. griseus (strain JCM 4626 / CBS 651.72 / NBRC 13350 / KCC S-0626 / ISP 5235) protein is ATP synthase subunit delta.